A 428-amino-acid polypeptide reads, in one-letter code: Serine--tRNA ligase (428 aa).

235–237 contacts L-serine; sequence TAE. Residue 266 to 268 participates in ATP binding; the sequence is RSE. E289 contributes to the L-serine binding site. 353-356 contacts ATP; sequence EISS. S389 provides a ligand contact to L-serine.

It belongs to the class-II aminoacyl-tRNA synthetase family. Type-1 seryl-tRNA synthetase subfamily. As to quaternary structure, homodimer. The tRNA molecule binds across the dimer.

It localises to the cytoplasm. It carries out the reaction tRNA(Ser) + L-serine + ATP = L-seryl-tRNA(Ser) + AMP + diphosphate + H(+). The enzyme catalyses tRNA(Sec) + L-serine + ATP = L-seryl-tRNA(Sec) + AMP + diphosphate + H(+). It participates in aminoacyl-tRNA biosynthesis; selenocysteinyl-tRNA(Sec) biosynthesis; L-seryl-tRNA(Sec) from L-serine and tRNA(Sec): step 1/1. Catalyzes the attachment of serine to tRNA(Ser). Is also able to aminoacylate tRNA(Sec) with serine, to form the misacylated tRNA L-seryl-tRNA(Sec), which will be further converted into selenocysteinyl-tRNA(Sec). The chain is Serine--tRNA ligase from Shewanella amazonensis (strain ATCC BAA-1098 / SB2B).